The chain runs to 161 residues: Putative pre-16S rRNA nuclease (161 aa).

This sequence belongs to the YqgF nuclease family.

It localises to the cytoplasm. Its function is as follows. Could be a nuclease involved in processing of the 5'-end of pre-16S rRNA. This Prochlorococcus marinus (strain MIT 9313) protein is Putative pre-16S rRNA nuclease.